Reading from the N-terminus, the 255-residue chain is tRNA uridine(34) hydroxylase (255 aa).

A Rhodanese domain is found at 131–225 (AAPDTLVLDT…YLEEVPEAQS (95 aa)). The active-site Cysteine persulfide intermediate is the Cys185.

Belongs to the TrhO family.

The enzyme catalyses uridine(34) in tRNA + AH2 + O2 = 5-hydroxyuridine(34) in tRNA + A + H2O. Catalyzes oxygen-dependent 5-hydroxyuridine (ho5U) modification at position 34 in tRNAs. The chain is tRNA uridine(34) hydroxylase from Bradyrhizobium diazoefficiens (strain JCM 10833 / BCRC 13528 / IAM 13628 / NBRC 14792 / USDA 110).